The chain runs to 115 residues: Large ribosomal subunit protein bL19 (115 aa).

It belongs to the bacterial ribosomal protein bL19 family.

Functionally, this protein is located at the 30S-50S ribosomal subunit interface and may play a role in the structure and function of the aminoacyl-tRNA binding site. This is Large ribosomal subunit protein bL19 from Francisella tularensis subsp. tularensis (strain FSC 198).